We begin with the raw amino-acid sequence, 148 residues long: uncharacterized protein (148 aa).

A helical membrane pass occupies residues Met-1–Phe-21. The tract at residues Ala-27 to Thr-61 is disordered.

Its subcellular location is the host membrane. This is an uncharacterized protein from Frog virus 3 (isolate Goorha) (FV-3).